Here is a 358-residue protein sequence, read N- to C-terminus: Peptide chain release factor 1 (358 aa).

Glutamine 232 bears the N5-methylglutamine mark.

This sequence belongs to the prokaryotic/mitochondrial release factor family. Methylated by PrmC. Methylation increases the termination efficiency of RF1.

Its subcellular location is the cytoplasm. Its function is as follows. Peptide chain release factor 1 directs the termination of translation in response to the peptide chain termination codons UAG and UAA. The polypeptide is Peptide chain release factor 1 (Acidobacterium capsulatum (strain ATCC 51196 / DSM 11244 / BCRC 80197 / JCM 7670 / NBRC 15755 / NCIMB 13165 / 161)).